A 198-amino-acid chain; its full sequence is Peptidyl-tRNA hydrolase (198 aa).

TRNA is bound at residue Y17. H22 functions as the Proton acceptor in the catalytic mechanism. TRNA is bound by residues Y74, N76, and N122.

It belongs to the PTH family. Monomer.

Its subcellular location is the cytoplasm. The enzyme catalyses an N-acyl-L-alpha-aminoacyl-tRNA + H2O = an N-acyl-L-amino acid + a tRNA + H(+). Functionally, hydrolyzes ribosome-free peptidyl-tRNAs (with 1 or more amino acids incorporated), which drop off the ribosome during protein synthesis, or as a result of ribosome stalling. Catalyzes the release of premature peptidyl moieties from peptidyl-tRNA molecules trapped in stalled 50S ribosomal subunits, and thus maintains levels of free tRNAs and 50S ribosomes. This Kineococcus radiotolerans (strain ATCC BAA-149 / DSM 14245 / SRS30216) protein is Peptidyl-tRNA hydrolase.